Reading from the N-terminus, the 100-residue chain is Urease subunit gamma (100 aa).

The protein belongs to the urease gamma subunit family. In terms of assembly, heterotrimer of UreA (gamma), UreB (beta) and UreC (alpha) subunits. Three heterotrimers associate to form the active enzyme.

It is found in the cytoplasm. It catalyses the reaction urea + 2 H2O + H(+) = hydrogencarbonate + 2 NH4(+). It participates in nitrogen metabolism; urea degradation; CO(2) and NH(3) from urea (urease route): step 1/1. The polypeptide is Urease subunit gamma (Synechocystis sp. (strain ATCC 27184 / PCC 6803 / Kazusa)).